The following is a 949-amino-acid chain: Protocadherin alpha-11 (949 aa).

An N-terminal signal peptide occupies residues 1–29 (MFGFQRRGLGTPRLQLWLLLLEFWEVGSG). Cadherin domains lie at 30-133 (QLHY…PPVF), 157-242 (ASDA…DPDF), 243-349 (DKSE…SPEV), 350-454 (AVTS…APAF), 455-564 (AQPE…APAL), and 580-677 (VPRS…APKA). At 30–696 (QLHYSVSEEA…SPEAALVDVN (667 aa)) the chain is on the extracellular side. Asn-265 and Asn-304 each carry an N-linked (GlcNAc...) asparagine glycan. An N-linked (GlcNAc...) asparagine glycan is attached at Asn-547. Residues 697-717 (VYLIIAICVVSSLLVLTLLLY) traverse the membrane as a helical segment. Topologically, residues 718–949 (TALWCSATPT…GNSTTDNSDQ (232 aa)) are cytoplasmic. PXXP repeat units lie at residues 733–736 (PGKP) and 773–776 (PSLP). The segment at 733-893 (PGKPTLVCSR…PDKFIIPGSP (161 aa)) is 6 X 4 AA repeats of P-X-X-P. 3 disordered regions span residues 753-807 (RRQR…DWRY), 826-858 (ILRAGPGGPDQQWPTVSSATPEPEAGEVSPPVG), and 870-889 (YGPGNPKQSGPGELPDKFII). Positions 780-789 (NKEEEGERQE) are enriched in basic and acidic residues. PXXP repeat units lie at residues 795-798 (PGQP), 831-834 (PGGP), 872-875 (PGNP), and 890-893 (PGSP). Residues 900–949 (QEPANSQIDKSDFITFGKKEETKKKKKKKKGNKTQEKKEKGNSTTDNSDQ) form a disordered region. Basic and acidic residues predominate over residues 908–922 (DKSDFITFGKKEETK).

The protein resides in the cell membrane. Functionally, potential calcium-dependent cell-adhesion protein. May be involved in the establishment and maintenance of specific neuronal connections in the brain. This chain is Protocadherin alpha-11 (PCDHA11), found in Pan troglodytes (Chimpanzee).